A 209-amino-acid chain; its full sequence is Redox-sensing transcriptional repressor Rex (209 aa).

The segment at residues 16–55 (LYYRFIQNLSLSGKQRVSSAELSEAVKVDSATIRRDFSYF) is a DNA-binding region (H-T-H motif). 90 to 95 (GVGNLG) provides a ligand contact to NAD(+).

The protein belongs to the transcriptional regulatory Rex family. Homodimer.

The protein resides in the cytoplasm. Its function is as follows. Modulates transcription in response to changes in cellular NADH/NAD(+) redox state. The polypeptide is Redox-sensing transcriptional repressor Rex (Bacillus thuringiensis (strain Al Hakam)).